The chain runs to 100 residues: Guanine nucleotide exchange factor MSS4 homolog (100 aa).

Positions M1–N100 constitute an MSS4 domain. Zn(2+)-binding residues include C8, C11, C73, and C76.

Belongs to the DSS4/MSS4 family.

Guanine-nucleotide-releasing protein that acts on members of the sec4/ypt1/rab subfamily. In Schizosaccharomyces pombe (strain 972 / ATCC 24843) (Fission yeast), this protein is Guanine nucleotide exchange factor MSS4 homolog.